Here is a 221-residue protein sequence, read N- to C-terminus: 7-cyano-7-deazaguanine synthase (221 aa).

An ATP-binding site is contributed by 8–18; sequence LSGGMDSAAVI. Residues Cys186, Cys196, Cys199, and Cys202 each contribute to the Zn(2+) site.

This sequence belongs to the QueC family. Zn(2+) is required as a cofactor.

The catalysed reaction is 7-carboxy-7-deazaguanine + NH4(+) + ATP = 7-cyano-7-deazaguanine + ADP + phosphate + H2O + H(+). The protein operates within purine metabolism; 7-cyano-7-deazaguanine biosynthesis. In terms of biological role, catalyzes the ATP-dependent conversion of 7-carboxy-7-deazaguanine (CDG) to 7-cyano-7-deazaguanine (preQ(0)). The sequence is that of 7-cyano-7-deazaguanine synthase from Stenotrophomonas maltophilia (strain R551-3).